Reading from the N-terminus, the 154-residue chain is Myoglobin (154 aa).

Residues 2–148 form the Globin domain; the sequence is GLSDGEWQLV…FRNDIAAKYK (147 aa). Phosphoserine is present on serine 4. Histidine 65 lines the nitrite pocket. Histidine 65 serves as a coordination point for O2. Threonine 68 carries the phosphothreonine modification. Histidine 94 contributes to the heme b binding site.

This sequence belongs to the globin family. Monomeric.

It localises to the cytoplasm. It is found in the sarcoplasm. The enzyme catalyses Fe(III)-heme b-[protein] + nitric oxide + H2O = Fe(II)-heme b-[protein] + nitrite + 2 H(+). The catalysed reaction is H2O2 + AH2 = A + 2 H2O. Its function is as follows. Monomeric heme protein which primary function is to store oxygen and facilitate its diffusion within muscle tissues. Reversibly binds oxygen through a pentacoordinated heme iron and enables its timely and efficient release as needed during periods of heightened demand. Depending on the oxidative conditions of tissues and cells, and in addition to its ability to bind oxygen, it also has a nitrite reductase activity whereby it regulates the production of bioactive nitric oxide. Under stress conditions, like hypoxia and anoxia, it also protects cells against reactive oxygen species thanks to its pseudoperoxidase activity. In Vulpes chama (Cape fox), this protein is Myoglobin (MB).